Consider the following 96-residue polypeptide: UPF0251 protein VPA0321 (96 aa).

Belongs to the UPF0251 family.

The polypeptide is UPF0251 protein VPA0321 (Vibrio parahaemolyticus serotype O3:K6 (strain RIMD 2210633)).